The primary structure comprises 262 residues: Trypsin theta (262 aa).

The first 19 residues, 1–19 (MHRLVVLLVCLAVGSACAG), serve as a signal peptide directing secretion. The propeptide at 20–34 (TVGVSNGDPFEREGR) is activation peptide. The 226-residue stretch at 35-260 (IVGGEDTTIG…LRKWILNASE (226 aa)) folds into the Peptidase S1 domain. C61 and C77 form a disulfide bridge. Active-site charge relay system residues include H76 and D121. Intrachain disulfides connect C186–C203 and C212–C236. Catalysis depends on S216, which acts as the Charge relay system.

It belongs to the peptidase S1 family.

The protein localises to the secreted. Its subcellular location is the extracellular space. It catalyses the reaction Preferential cleavage: Arg-|-Xaa, Lys-|-Xaa.. This chain is Trypsin theta (thetaTry), found in Drosophila melanogaster (Fruit fly).